The primary structure comprises 125 residues: uncharacterized protein (125 aa).

The protein resides in the plastid. This is an uncharacterized protein from Euglena longa (Euglenophycean alga).